Reading from the N-terminus, the 211-residue chain is 3,4-dihydroxy-2-butanone 4-phosphate synthase (211 aa).

Residues 37 to 38 (RE), D42, 150 to 154 (RIGHT), and E174 contribute to the D-ribulose 5-phosphate site. Residue E38 coordinates Mg(2+). Residue H153 participates in Mg(2+) binding.

It belongs to the DHBP synthase family. As to quaternary structure, homodimer. It depends on Mg(2+) as a cofactor. Mn(2+) is required as a cofactor.

It catalyses the reaction D-ribulose 5-phosphate = (2S)-2-hydroxy-3-oxobutyl phosphate + formate + H(+). The protein operates within cofactor biosynthesis; riboflavin biosynthesis; 2-hydroxy-3-oxobutyl phosphate from D-ribulose 5-phosphate: step 1/1. In terms of biological role, catalyzes the conversion of D-ribulose 5-phosphate to formate and 3,4-dihydroxy-2-butanone 4-phosphate. In Buchnera aphidicola subsp. Baizongia pistaciae (strain Bp), this protein is 3,4-dihydroxy-2-butanone 4-phosphate synthase.